Here is a 474-residue protein sequence, read N- to C-terminus: Proline--tRNA ligase (474 aa).

Belongs to the class-II aminoacyl-tRNA synthetase family. ProS type 3 subfamily. Homodimer.

The protein localises to the cytoplasm. It catalyses the reaction tRNA(Pro) + L-proline + ATP = L-prolyl-tRNA(Pro) + AMP + diphosphate. In terms of biological role, catalyzes the attachment of proline to tRNA(Pro) in a two-step reaction: proline is first activated by ATP to form Pro-AMP and then transferred to the acceptor end of tRNA(Pro). This is Proline--tRNA ligase from Aster yellows witches'-broom phytoplasma (strain AYWB).